The sequence spans 544 residues: MAAKNIKYNEDARKKIHKGVKTLAEAVKVTLGPKGRHVVIDKSFGSPQVTKDGVTVAKEIELEDKHENMGAQMVKEVASKTADKAGDGTTTATVLAEAIYSEGLRNVTAGANPMDLKRGIDKAVKVVVDEIKKISKPVQHHKEIAQVATISANNDAEIGNLIAEAMEKVGKNGSITVEEAKGFETVLDVVEGMNFNRGYLSSYFSTNPETQECVLEEALVLIYDKKISGIKDFLPVLQQVAESGRPLLIIAEDIEGEALATLVVNRLRAGFRVCAVKAPGFGDRRKAMLEDIAILTGGQLISEELGMKLENTTLAMLGKAKKVIVSKEDTTIVEGLGSKEDIESRCESIKKQIEDSTSDYDKEKLQERLAKLSGGVAVIRVGAATEIEMKEKKDRVDDAQHATLAAVEEGILPGGGTALVRCIPTLEAFIPILTNEDEQIGARIVLKALSAPLKQIAANAGKEGAIICQQVLSRSSSEGYDALRDAYTDMIEAGILDPTKVTRCALESAASVAGLLLTTEALIADIPEEKSSSAPAMPGAGMDY.

Residues 30 to 33, K51, 87 to 91, G415, 481 to 483, and D497 contribute to the ATP site; these read TLGP, DGTTT, and DAL.

This sequence belongs to the chaperonin (HSP60) family. In terms of assembly, forms a cylinder of 14 subunits composed of two heptameric rings stacked back-to-back. Interacts with the co-chaperonin GroES.

It is found in the cytoplasm. It catalyses the reaction ATP + H2O + a folded polypeptide = ADP + phosphate + an unfolded polypeptide.. Functionally, together with its co-chaperonin GroES, plays an essential role in assisting protein folding. The GroEL-GroES system forms a nano-cage that allows encapsulation of the non-native substrate proteins and provides a physical environment optimized to promote and accelerate protein folding. In Chlamydia caviae (strain ATCC VR-813 / DSM 19441 / 03DC25 / GPIC) (Chlamydophila caviae), this protein is Chaperonin GroEL 1.